The following is a 375-amino-acid chain: Histidine biosynthesis bifunctional protein HisB (375 aa).

The segment at 1 to 168 (MTPILFVDRD…GIAHELADAP (168 aa)) is histidinol-phosphatase. Asp8 serves as the catalytic Nucleophile. Residues Asp8, Asp10, and Asp128 each coordinate Mg(2+). Asp10 acts as the Proton donor in catalysis. The imidazoleglycerol-phosphate dehydratase stretch occupies residues 169 to 375 (RRAVVQRNTK…TALPTTKGAL (207 aa)).

In the N-terminal section; belongs to the histidinol-phosphatase family. It in the C-terminal section; belongs to the imidazoleglycerol-phosphate dehydratase family. It depends on Mg(2+) as a cofactor.

Its subcellular location is the cytoplasm. It catalyses the reaction D-erythro-1-(imidazol-4-yl)glycerol 3-phosphate = 3-(imidazol-4-yl)-2-oxopropyl phosphate + H2O. It carries out the reaction L-histidinol phosphate + H2O = L-histidinol + phosphate. It functions in the pathway amino-acid biosynthesis; L-histidine biosynthesis; L-histidine from 5-phospho-alpha-D-ribose 1-diphosphate: step 6/9. The protein operates within amino-acid biosynthesis; L-histidine biosynthesis; L-histidine from 5-phospho-alpha-D-ribose 1-diphosphate: step 8/9. This Xanthomonas euvesicatoria pv. vesicatoria (strain 85-10) (Xanthomonas campestris pv. vesicatoria) protein is Histidine biosynthesis bifunctional protein HisB.